We begin with the raw amino-acid sequence, 913 residues long: Striatin-interacting protein homolog (913 aa).

Composition is skewed to low complexity over residues 177 to 188 (QQQQQQQQNENE), 195 to 204 (TNFTTTTTTT), and 791 to 811 (NNNN…NNDN). Disordered regions lie at residues 177–204 (QQQQ…TTTT) and 791–814 (NNNN…NGLT).

It belongs to the STRIP family.

This chain is Striatin-interacting protein homolog (fam40), found in Dictyostelium discoideum (Social amoeba).